We begin with the raw amino-acid sequence, 307 residues long: MTTTTLLSESTNNSNNTNNNTNNNTNNTMNNNNNNNNNNTIGNNNNNNPEYDILINILMLGDEEVGKGSVARRYTEGYFPINENLYNIEVDRKHKDIKDWGDGLIKRKDPNKPVIGRLQLWNFHMHKISDIPTKQQYRETNGFILFFDVTNKSSFLQLSSLIELVRAKCADENNNFNCQSNSRNSTNYNRHSVGNHCPNSPQKGEKENNTHSSTAPPAPPPLPPIVIVGNKCDDVSNTVVDPIAAKKYCDSLSIPLLFISAKTNENVNEAFNILQGLIIKQMKIKERERQKLLKQKHIKKDVNCNLM.

Residues 1 to 10 (MTTTTLLSES) are compositionally biased toward polar residues. The interval 1-45 (MTTTTLLSESTNNSNNTNNNTNNNTNNTMNNNNNNNNNNTIGNNN) is disordered. Residues 11 to 45 (TNNSNNTNNNTNNNTNNTMNNNNNNNNNNTIGNNN) are compositionally biased toward low complexity. Residue 61 to 68 (GDEEVGKG) coordinates GTP. An Effector region motif is present at residues 83–92 (ENLYNIEVDR). 122-126 (NFHMH) is a GTP binding site. The span at 175–185 (NFNCQSNSRNS) shows a compositional bias: low complexity. A disordered region spans residues 175–223 (NFNCQSNSRNSTNYNRHSVGNHCPNSPQKGEKENNTHSSTAPPAPPPLP). The span at 186–202 (TNYNRHSVGNHCPNSPQ) shows a compositional bias: polar residues. Residue 230 to 233 (NKCD) coordinates GTP. Cysteine 304 is modified (cysteine methyl ester). Cysteine 304 carries the S-geranylgeranyl cysteine lipid modification. The propeptide at 305 to 307 (NLM) is removed in mature form.

It belongs to the small GTPase superfamily. Rab family.

The protein localises to the cell membrane. The sequence is that of Ras-related protein RabR (rabR) from Dictyostelium discoideum (Social amoeba).